The primary structure comprises 99 residues: Large ribosomal subunit protein eL30 (99 aa).

Belongs to the eukaryotic ribosomal protein eL30 family.

In Methanosarcina acetivorans (strain ATCC 35395 / DSM 2834 / JCM 12185 / C2A), this protein is Large ribosomal subunit protein eL30.